The chain runs to 292 residues: MFRGSHVAIVTPMLEDGALDLDRFCALIDFHIEQGTDGIVVVGTTGESPTVDFDEHDLLIRTAVSYADGRIPIIAGTGANSTREAIELTVFSKNAGADACLSVAPYYNKPTQEGLYQHFKAIAEAVDIPMILYNVPGRTVADISNETTLRLAQIPGIVGIKDATGNIARGCDLVQRVPDNFAVYSGDDATALALLLLGGHGIISVTANVAPRLMHEMCTAALSGDLAQARAINARLFKLHIDLFVEANPIPVKWAVAKMGLINENIRLPLTALSSQHHELIRKAMLQAGITV.

Pyruvate is bound at residue Thr45. Tyr133 (proton donor/acceptor) is an active-site residue. Catalysis depends on Lys161, which acts as the Schiff-base intermediate with substrate. Pyruvate is bound at residue Ile203.

This sequence belongs to the DapA family. In terms of assembly, homotetramer; dimer of dimers.

Its subcellular location is the cytoplasm. The enzyme catalyses L-aspartate 4-semialdehyde + pyruvate = (2S,4S)-4-hydroxy-2,3,4,5-tetrahydrodipicolinate + H2O + H(+). It participates in amino-acid biosynthesis; L-lysine biosynthesis via DAP pathway; (S)-tetrahydrodipicolinate from L-aspartate: step 3/4. Its function is as follows. Catalyzes the condensation of (S)-aspartate-beta-semialdehyde [(S)-ASA] and pyruvate to 4-hydroxy-tetrahydrodipicolinate (HTPA). This Nitrosomonas eutropha (strain DSM 101675 / C91 / Nm57) protein is 4-hydroxy-tetrahydrodipicolinate synthase.